Reading from the N-terminus, the 1807-residue chain is MPGPDDDVREPTAAARTNNSGYGLRAAPSSITSGLDSVVSVNSYRSSELNAEEVNVDDQECADSDILESPNDGMTIMNDDDADLSEEEEEVMENSIDFSVNRATVTKAGVIPCCVFVGRVRWGTTDWEIYFGQKQLLRLHFNLHLYSLFNRHKLLRGVHLPCTIWREKRAEKRVMDVYVVQDYIRQLLKDRDLRNSEPLLSFLEVSPSRAMLRLGPSLKEGYVHMRINGPFQLPLYTCFNRTIEALYRHLYRAWMRIAFVSAIVGFIFPICLVIVTSLPTFFSPQKELVNSDSGTKEVSTKLNTAGVFLGLAVLGGILFFAVFVYKFFQHRLGVIRRWVVLKPSCFAAYRNRNDREPSEVFLFDKNFTARKGSYRQGVSWMPSGLVVGSKAGDIEIDTGHYYTRLTAFVALMGVCYGIMRLSNSIYDFEYLSLDKSMGVPITNASGYENWTESRDAEYCGYYFIVPKGTTVYVESKDDSAVISQLQMPSSNSMTANLGFFWQSDSMGYSLNVITNAVGAGTMVSVVKPIDAKNDRFFESGTNYSMPTVGNLTLEGVKTDIDVQSFSNVESFCAITVRIAPLTWRSYVYYILFLFAGGIIAPVVGFLANYFVTYLGIWHPHVRRDHWFRCVRRLQKLKRQETSTRFNSFAPQHISTIDDDESATITAKAKAAKLAIGNTPTSNINQVVDSVVKQEAETASRMGTGNLAPASSRVDSSTQSEDSFEAPKPPPSSVSWHVDAEDTYAAMYKAISNAKYEILIAGWWVCPDLFLLRPGRKLPPREADEDPDGQQVNKTMLRQVLMKKAEAGVKIYVLIYREVKLALTLNSAYTKRSLMVHPNIRVLRDPIFQIQSLGFWSHHEKIVCIDQSLAFVGGLDLCFGRYDHHGHPISDPSDDPVWTGKDYSNPIIKDFVRVNKPFEDLIDRASQPRMPWHDVHCSISGPPVQDVAYHLIQRWNFVCSKNDYQLRTGWCICFRSRRFKFLPKCLVPMDFNGWTLQYPSSDPEPMRDGSTRTTIPLVREDSLSMVEPFQVVQSVNPMYPCTATGPQWPPTSSLHPINPMRPPLTSASTTTGPLDDGEVLRAQRGESILQVFHPSANICNIQVCRSVSMWSAGVPTEASIQAAYMDVIANSKHFLYIENQFFVSGMDGNGIVRNRILQALVDRIERAVQRDEKFRVYVVMPLLPAFEGNIRSHELTNLHAVMHWQFATICRGRYSLFEALKGVTNHPENYVAFFGLRKYGIMPNGCAATEQIYIHSKLMIADDRCAILGSANINDRSMNGDRDSEIALVIEDMQYEDGVMNEKPYRRGVAASKLRLQLFREHLGLADDDLSVADPTSDHTWQAIKSTASSNTKIFEAVFDCAPSNRMRAFVNFQSIEVTQIFENQRMNVLKVPGRSHVWDAQNLKDGDYAPWTDVNGVPIAADRVDLRDFEVDNYRDKKKKLFSMDHDGWCYARNFSIFQEVRTMKTDYKKREKLQHLVADRLMAQVRRRRWVKKGLLPPRDPRESSFSLASDDEEHGRFYSLWRRLQQGDFSRSNSVSTPTNFSQLDTDGGISGSVSVGGTNHGRRLYNSNSMPSNASILGDNPTTRPPVLGDAPSYPNSPSVASFQHTPQSPAIATGARSVRSARTSSLLCTGAGVRTRGNTRSARGSFYGMFSVTGNRNLDTDDESSDAGSEYGGGHGIRASLKRWYSTMDVLDFGRRSKFNAEYFDTDEDHLHSDDPLLEDGRGSYHAATREGLLTEEAVEGSDDEDAECQIGHVQTAATVRKEDETRARAQLSEIRGHLVEFPLDFLVEEILKPSVLPADIHI.

Residues 1–28 (MPGPDDDVREPTAAARTNNSGYGLRAAP) form a disordered region. 3 consecutive transmembrane segments (helical) span residues 257-277 (IAFV…IVTS), 305-325 (AGVF…VFVY), and 587-607 (VYYI…GFLA). Residues 697 to 734 (TASRMGTGNLAPASSRVDSSTQSEDSFEAPKPPPSSVS) form a disordered region. PLD phosphodiesterase domains follow at residues 853–880 (GFWS…CFGR) and 1249–1276 (EQIY…NDRS). Residues His858, Lys860, Asp865, His1254, Lys1256, and Asp1261 contribute to the active site. Composition is skewed to polar residues over residues 1531 to 1547 (FSRS…SQLD), 1568 to 1578 (YNSNSMPSNAS), and 1597 to 1614 (YPNS…QSPA). The segment at 1531–1621 (FSRSNSVSTP…SPAIATGARS (91 aa)) is disordered.

The protein belongs to the phospholipase D family. TM-PLD subfamily.

The protein localises to the membrane. The catalysed reaction is a 1,2-diacyl-sn-glycero-3-phosphocholine + H2O = a 1,2-diacyl-sn-glycero-3-phosphate + choline + H(+). In terms of biological role, hydrolyzes glycerol-phospholipids at the terminal phosphodiesteric bond. In Phytophthora infestans (Potato late blight agent), this protein is Phospholipase D.